Consider the following 273-residue polypeptide: Pantothenate synthetase (273 aa).

27–34 is a binding site for ATP; it reads MGALHNGH. Residue His-34 is the Proton donor of the active site. (R)-pantoate is bound at residue Gln-58. Gln-58 serves as a coordination point for beta-alanine. An ATP-binding site is contributed by 144 to 147; that stretch reads GKKD. Gln-150 is a (R)-pantoate binding site. ATP-binding positions include Val-173 and 181–184; that span reads LSSR.

This sequence belongs to the pantothenate synthetase family. Homodimer.

The protein resides in the cytoplasm. It carries out the reaction (R)-pantoate + beta-alanine + ATP = (R)-pantothenate + AMP + diphosphate + H(+). It participates in cofactor biosynthesis; (R)-pantothenate biosynthesis; (R)-pantothenate from (R)-pantoate and beta-alanine: step 1/1. Catalyzes the condensation of pantoate with beta-alanine in an ATP-dependent reaction via a pantoyl-adenylate intermediate. This chain is Pantothenate synthetase, found in Campylobacter fetus subsp. fetus (strain 82-40).